The following is a 329-amino-acid chain: Cytosolic sulfotransferase 6 (329 aa).

74–79 (KCGTTW) serves as a coordination point for 3'-phosphoadenylyl sulfate. The active-site Proton acceptor is the H140. Residues R162, S170, and 295–297 (RKG) contribute to the 3'-phosphoadenylyl sulfate site.

It belongs to the sulfotransferase 1 family.

The protein localises to the cytoplasm. Functionally, sulfotransferase that utilizes 3'-phospho-5'-adenylyl sulfate (PAPS) as sulfonate donor. In Arabidopsis thaliana (Mouse-ear cress), this protein is Cytosolic sulfotransferase 6 (SOT6).